Reading from the N-terminus, the 126-residue chain is Large ribosomal subunit protein bL17 (126 aa).

The protein belongs to the bacterial ribosomal protein bL17 family. Part of the 50S ribosomal subunit. Contacts protein L32.

In Nitrosococcus oceani (strain ATCC 19707 / BCRC 17464 / JCM 30415 / NCIMB 11848 / C-107), this protein is Large ribosomal subunit protein bL17.